The primary structure comprises 256 residues: Ribonuclease 3-like protein 1 (256 aa).

One can recognise an RNase III domain in the interval 22 to 168; the sequence is AEVERALGGY…IVGAVYLDSK (147 aa). Positions 65, 154, and 157 each coordinate Mg(2+).

It depends on Mg(2+) as a cofactor. The cofactor is Mn(2+).

Cleaves double-stranded RNA (dsRNA). This chain is Ribonuclease 3-like protein 1, found in Oryza sativa subsp. japonica (Rice).